Here is a 304-residue protein sequence, read N- to C-terminus: Non-specific ribonucleoside hydrolase RihC (304 aa).

Histidine 233 is an active-site residue.

It belongs to the IUNH family. RihC subfamily.

In terms of biological role, hydrolyzes both purine and pyrimidine ribonucleosides with a broad-substrate specificity. The sequence is that of Non-specific ribonucleoside hydrolase RihC from Escherichia fergusonii (strain ATCC 35469 / DSM 13698 / CCUG 18766 / IAM 14443 / JCM 21226 / LMG 7866 / NBRC 102419 / NCTC 12128 / CDC 0568-73).